The primary structure comprises 334 residues: Protein-methionine-sulfoxide reductase catalytic subunit MsrP (334 aa).

A signal peptide (tat-type signal) is located at residues 1–44 (MKKNQFLKESDVTAESVFFMKRRQVLKALGISAAAFSLPHAAHA). Residues Asn-88, 91 to 92 (YE), Cys-146, Thr-181, Asn-233, Arg-238, and 249 to 251 (GIK) contribute to the Mo-molybdopterin site.

It belongs to the MsrP family. In terms of assembly, heterodimer of a catalytic subunit (MsrP) and a heme-binding subunit (MsrQ). Mo-molybdopterin serves as cofactor. In terms of processing, predicted to be exported by the Tat system. The position of the signal peptide cleavage has not been experimentally proven.

The protein resides in the periplasm. The catalysed reaction is L-methionyl-[protein] + a quinone + H2O = L-methionyl-(S)-S-oxide-[protein] + a quinol. The enzyme catalyses L-methionyl-[protein] + a quinone + H2O = L-methionyl-(R)-S-oxide-[protein] + a quinol. Functionally, part of the MsrPQ system that repairs oxidized periplasmic proteins containing methionine sulfoxide residues (Met-O), using respiratory chain electrons. Thus protects these proteins from oxidative-stress damage caused by reactive species of oxygen and chlorine generated by the host defense mechanisms. MsrPQ is essential for the maintenance of envelope integrity under bleach stress, rescuing a wide series of structurally unrelated periplasmic proteins from methionine oxidation, including the primary periplasmic chaperone SurA and the lipoprotein Pal. The catalytic subunit MsrP is non-stereospecific, being able to reduce both (R-) and (S-) diastereoisomers of methionine sulfoxide. This chain is Protein-methionine-sulfoxide reductase catalytic subunit MsrP, found in Escherichia coli O7:K1 (strain IAI39 / ExPEC).